Here is a 141-residue protein sequence, read N- to C-terminus: Putative pre-16S rRNA nuclease (141 aa).

The protein belongs to the YqgF nuclease family.

It localises to the cytoplasm. In terms of biological role, could be a nuclease involved in processing of the 5'-end of pre-16S rRNA. In Coxiella burnetii (strain CbuG_Q212) (Coxiella burnetii (strain Q212)), this protein is Putative pre-16S rRNA nuclease.